Reading from the N-terminus, the 147-residue chain is uncharacterized protein (147 aa).

One can recognise an HTH LytTR-type domain in the interval Leu44–Ile147.

The protein resides in the cytoplasm. This is an uncharacterized protein from Staphylococcus aureus (strain COL).